Reading from the N-terminus, the 327-residue chain is Vacuolar protein sorting-associated protein 26A (327 aa).

Residues 305–327 (RNFHQRYESPEPRPSLSAEQPEM) are disordered.

It belongs to the VPS26 family. Component of the heterotrimeric retromer cargo-selective complex (CSC) which is believed to associate with variable sorting nexins to form functionally distinct retromer complex variants.

The protein resides in the cytoplasm. The protein localises to the endosome membrane. It is found in the early endosome. Functionally, acts as a component of the retromer cargo-selective complex (CSC). The CSC is believed to be the core functional component of retromer or respective retromer complex variants acting to prevent missorting of selected transmembrane cargo proteins into the lysosomal degradation pathway. Retromer mediates retrograde transport of cargo proteins from endosomes to the trans-Golgi network (TGN). The chain is Vacuolar protein sorting-associated protein 26A (vps26a) from Danio rerio (Zebrafish).